A 523-amino-acid chain; its full sequence is GMP synthase [glutamine-hydrolyzing] (523 aa).

A Glutamine amidotransferase type-1 domain is found at 8 to 205; that stretch reads KILILDFGSQ…VVDICGCETN (198 aa). Cys-85 acts as the Nucleophile in catalysis. Active-site residues include His-179 and Glu-181. One can recognise a GMPS ATP-PPase domain in the interval 206–398; it reads WTAENIIEDA…LGLPAEMLNR (193 aa). 233–239 lines the ATP pocket; that stretch reads SGGVDSS.

Homodimer.

The catalysed reaction is XMP + L-glutamine + ATP + H2O = GMP + L-glutamate + AMP + diphosphate + 2 H(+). It participates in purine metabolism; GMP biosynthesis; GMP from XMP (L-Gln route): step 1/1. Its function is as follows. Catalyzes the synthesis of GMP from XMP. The polypeptide is GMP synthase [glutamine-hydrolyzing] (Histophilus somni (strain 2336) (Haemophilus somnus)).